We begin with the raw amino-acid sequence, 171 residues long: Auxin-responsive protein IAA33 (171 aa).

Polar residues-rich tracts occupy residues 1 to 11 (MNSFEPQSQDS) and 19 to 32 (DNST…TTTP). The tract at residues 1–51 (MNSFEPQSQDSLQRRFHQDNSTTQQPRDTTTPFIPKPASKNHNNSNSSSGA) is disordered. Residues 40-49 (KNHNNSNSSS) are compositionally biased toward low complexity. The PB1 domain maps to 72–162 (VPPVTVVLEG…KRIRILPVKG (91 aa)).

This sequence belongs to the Aux/IAA family. As to quaternary structure, homodimers and heterodimers.

It is found in the nucleus. In terms of biological role, aux/IAA proteins are short-lived transcriptional factors that function as repressors of early auxin response genes at low auxin concentrations. Repression is thought to result from the interaction with auxin response factors (ARFs), proteins that bind to the auxin-responsive promoter element (AuxRE). Formation of heterodimers with ARF proteins may alter their ability to modulate early auxin response genes expression. This Arabidopsis thaliana (Mouse-ear cress) protein is Auxin-responsive protein IAA33 (IAA33).